The chain runs to 391 residues: Chalcone synthase 2 (391 aa).

C164 is a catalytic residue.

Belongs to the thiolase-like superfamily. Chalcone/stilbene synthases family.

It catalyses the reaction (E)-4-coumaroyl-CoA + 3 malonyl-CoA + 3 H(+) = 2',4,4',6'-tetrahydroxychalcone + 3 CO2 + 4 CoA. Its pathway is secondary metabolite biosynthesis; flavonoid biosynthesis. The primary product of this enzyme is 4,2',4',6'-tetrahydroxychalcone (also termed naringenin-chalcone or chalcone) which can under specific conditions spontaneously isomerize into naringenin. The protein is Chalcone synthase 2 (CHS2) of Citrus sinensis (Sweet orange).